The following is a 60-amino-acid chain: Large ribosomal subunit protein bL32 (60 aa).

The disordered stretch occupies residues 1-60 (MAVQQNKKSRSARDMRRSHDALESNALSVEKSTGEVHLRHHVSPDGFYRGRKVVDKGSDE). Over residues 11-22 (SARDMRRSHDAL) the composition is skewed to basic and acidic residues.

It belongs to the bacterial ribosomal protein bL32 family.

This is Large ribosomal subunit protein bL32 from Pseudomonas aeruginosa (strain LESB58).